A 275-amino-acid polypeptide reads, in one-letter code: NH(3)-dependent NAD(+) synthetase (275 aa).

Residue 50–57 (GISGGVDS) coordinates ATP. Asp-56 lines the Mg(2+) pocket. Residue Arg-147 participates in deamido-NAD(+) binding. Residue Thr-167 coordinates ATP. Residue Glu-172 coordinates Mg(2+). Deamido-NAD(+)-binding residues include Lys-180 and Asp-187. Residues Lys-196 and Thr-218 each coordinate ATP. 267–268 (HK) contributes to the deamido-NAD(+) binding site.

Belongs to the NAD synthetase family. As to quaternary structure, homodimer.

It carries out the reaction deamido-NAD(+) + NH4(+) + ATP = AMP + diphosphate + NAD(+) + H(+). It participates in cofactor biosynthesis; NAD(+) biosynthesis; NAD(+) from deamido-NAD(+) (ammonia route): step 1/1. Its function is as follows. Catalyzes the ATP-dependent amidation of deamido-NAD to form NAD. Uses ammonia as a nitrogen source. The chain is NH(3)-dependent NAD(+) synthetase from Pseudomonas putida (strain ATCC 700007 / DSM 6899 / JCM 31910 / BCRC 17059 / LMG 24140 / F1).